The sequence spans 340 residues: Glycerol-3-phosphate dehydrogenase [NAD(P)+] (340 aa).

Serine 13, tryptophan 14, and lysine 108 together coordinate NADPH. The sn-glycerol 3-phosphate site is built by lysine 108, glycine 139, and serine 141. Alanine 143 contributes to the NADPH binding site. Positions 194, 247, 257, 258, and 259 each coordinate sn-glycerol 3-phosphate. The active-site Proton acceptor is the lysine 194. Position 258 (arginine 258) interacts with NADPH. Residues valine 282 and glutamate 284 each contribute to the NADPH site.

The protein belongs to the NAD-dependent glycerol-3-phosphate dehydrogenase family.

The protein resides in the cytoplasm. It catalyses the reaction sn-glycerol 3-phosphate + NAD(+) = dihydroxyacetone phosphate + NADH + H(+). The catalysed reaction is sn-glycerol 3-phosphate + NADP(+) = dihydroxyacetone phosphate + NADPH + H(+). It participates in membrane lipid metabolism; glycerophospholipid metabolism. Its function is as follows. Catalyzes the reduction of the glycolytic intermediate dihydroxyacetone phosphate (DHAP) to sn-glycerol 3-phosphate (G3P), the key precursor for phospholipid synthesis. The polypeptide is Glycerol-3-phosphate dehydrogenase [NAD(P)+] (Streptococcus sanguinis (strain SK36)).